The sequence spans 133 residues: Ribosome-binding factor A (133 aa).

This sequence belongs to the RbfA family. As to quaternary structure, monomer. Binds 30S ribosomal subunits, but not 50S ribosomal subunits or 70S ribosomes.

It localises to the cytoplasm. Functionally, one of several proteins that assist in the late maturation steps of the functional core of the 30S ribosomal subunit. Associates with free 30S ribosomal subunits (but not with 30S subunits that are part of 70S ribosomes or polysomes). Required for efficient processing of 16S rRNA. May interact with the 5'-terminal helix region of 16S rRNA. The protein is Ribosome-binding factor A of Salmonella typhi.